We begin with the raw amino-acid sequence, 71 residues long: Omega-conotoxin-like CnVIIF (71 aa).

3 disulfides stabilise this stretch: C46-C61, C53-C65, and C60-C70. C70 is modified (cysteine amide; in CnVIID).

It belongs to the conotoxin M superfamily. In terms of tissue distribution, expressed by the venom duct.

The protein resides in the secreted. Its function is as follows. Omega-conotoxins act at presynaptic membranes, they bind and block voltage-gated calcium channels (Cav). The protein is Omega-conotoxin-like CnVIIF of Conus consors (Singed cone).